A 684-amino-acid chain; its full sequence is Acetyl-coenzyme A synthetase 2 (684 aa).

CoA contacts are provided by residues 207 to 210 and Thr-326; that span reads RGGK. ATP-binding positions include 402–404, 426–431, Asp-517, and Arg-532; these read GEP and DTMWQT. Ser-540 is a binding site for CoA. Arg-543 is a binding site for ATP. Arg-613 is a CoA binding site.

It belongs to the ATP-dependent AMP-binding enzyme family.

It carries out the reaction acetate + ATP + CoA = acetyl-CoA + AMP + diphosphate. The sequence is that of Acetyl-coenzyme A synthetase 2 (ACS2) from Kluyveromyces lactis (strain ATCC 8585 / CBS 2359 / DSM 70799 / NBRC 1267 / NRRL Y-1140 / WM37) (Yeast).